The chain runs to 955 residues: Bifunctional glutamine synthetase adenylyltransferase/adenylyl-removing enzyme (955 aa).

The interval 1-458 is adenylyl removase; that stretch reads MTAQAPLSVA…QFEQTFSDKQ (458 aa). Residues 464–955 form an adenylyl transferase region; that stretch reads CAAIWHADLL…GSIDAASPTP (492 aa).

The protein belongs to the GlnE family. Requires Mg(2+) as cofactor.

The enzyme catalyses [glutamine synthetase]-O(4)-(5'-adenylyl)-L-tyrosine + phosphate = [glutamine synthetase]-L-tyrosine + ADP. The catalysed reaction is [glutamine synthetase]-L-tyrosine + ATP = [glutamine synthetase]-O(4)-(5'-adenylyl)-L-tyrosine + diphosphate. Involved in the regulation of glutamine synthetase GlnA, a key enzyme in the process to assimilate ammonia. When cellular nitrogen levels are high, the C-terminal adenylyl transferase (AT) inactivates GlnA by covalent transfer of an adenylyl group from ATP to specific tyrosine residue of GlnA, thus reducing its activity. Conversely, when nitrogen levels are low, the N-terminal adenylyl removase (AR) activates GlnA by removing the adenylyl group by phosphorolysis, increasing its activity. The regulatory region of GlnE binds the signal transduction protein PII (GlnB) which indicates the nitrogen status of the cell. The sequence is that of Bifunctional glutamine synthetase adenylyltransferase/adenylyl-removing enzyme from Ralstonia nicotianae (strain ATCC BAA-1114 / GMI1000) (Ralstonia solanacearum).